The primary structure comprises 475 residues: Ribulose bisphosphate carboxylase large chain (475 aa).

Positions 1–2 (MS) are excised as a propeptide. Proline 3 bears the N-acetylproline mark. Lysine 14 bears the N6,N6,N6-trimethyllysine mark. Asparagine 123 and threonine 173 together coordinate substrate. Lysine 175 serves as the catalytic Proton acceptor. Residue lysine 177 participates in substrate binding. 3 residues coordinate Mg(2+): lysine 201, aspartate 203, and glutamate 204. Lysine 201 bears the N6-carboxylysine mark. Residue histidine 294 is the Proton acceptor of the active site. 3 residues coordinate substrate: arginine 295, histidine 327, and serine 379.

Belongs to the RuBisCO large chain family. Type I subfamily. In terms of assembly, heterohexadecamer of 8 large chains and 8 small chains; disulfide-linked. The disulfide link is formed within the large subunit homodimers. It depends on Mg(2+) as a cofactor. The disulfide bond which can form in the large chain dimeric partners within the hexadecamer appears to be associated with oxidative stress and protein turnover.

It localises to the plastid. Its subcellular location is the chloroplast. The enzyme catalyses 2 (2R)-3-phosphoglycerate + 2 H(+) = D-ribulose 1,5-bisphosphate + CO2 + H2O. It carries out the reaction D-ribulose 1,5-bisphosphate + O2 = 2-phosphoglycolate + (2R)-3-phosphoglycerate + 2 H(+). Functionally, ruBisCO catalyzes two reactions: the carboxylation of D-ribulose 1,5-bisphosphate, the primary event in carbon dioxide fixation, as well as the oxidative fragmentation of the pentose substrate in the photorespiration process. Both reactions occur simultaneously and in competition at the same active site. The polypeptide is Ribulose bisphosphate carboxylase large chain (Keteleeria davidiana (David's keteleeria)).